The sequence spans 88 residues: Small ribosomal subunit protein uS15 (88 aa).

It belongs to the universal ribosomal protein uS15 family. In terms of assembly, part of the 30S ribosomal subunit. Forms a bridge to the 50S subunit in the 70S ribosome, contacting the 23S rRNA.

In terms of biological role, one of the primary rRNA binding proteins, it binds directly to 16S rRNA where it helps nucleate assembly of the platform of the 30S subunit by binding and bridging several RNA helices of the 16S rRNA. Forms an intersubunit bridge (bridge B4) with the 23S rRNA of the 50S subunit in the ribosome. The polypeptide is Small ribosomal subunit protein uS15 (Geobacter sulfurreducens (strain ATCC 51573 / DSM 12127 / PCA)).